The chain runs to 352 residues: Photosystem II D2 protein (352 aa).

A helical membrane pass occupies residues 40–60 (CAYLALGGWLTGTTFVTSWYT). H117 provides a ligand contact to chlorophyll a. The chain crosses the membrane as a helical span at residues 124-140 (GFMLRQFEIARLVGVRP). Q129 and N142 together coordinate pheophytin a. A helical membrane pass occupies residues 152–165 (VFVSVFLIYPLGQS). H197 contacts chlorophyll a. Residues 207–227 (GALLCAIHGATVENTLFQDGE) traverse the membrane as a helical segment. A plastoquinone contacts are provided by H214 and F261. Residue H214 coordinates Fe cation. H268 is a binding site for Fe cation. The helical transmembrane segment at 278–294 (GLWMSSIGVVGLALNLR) threads the bilayer.

The protein belongs to the reaction center PufL/M/PsbA/D family. PSII is composed of 1 copy each of membrane proteins PsbA, PsbB, PsbC, PsbD, PsbE, PsbF, PsbH, PsbI, PsbJ, PsbK, PsbL, PsbM, PsbT, PsbX, PsbY, PsbZ, Psb30/Ycf12, peripheral proteins PsbO, CyanoQ (PsbQ), PsbU, PsbV and a large number of cofactors. It forms dimeric complexes. Requires The D1/D2 heterodimer binds P680, chlorophylls that are the primary electron donor of PSII, and subsequent electron acceptors. It shares a non-heme iron and each subunit binds pheophytin, quinone, additional chlorophylls, carotenoids and lipids. There is also a Cl(-1) ion associated with D1 and D2, which is required for oxygen evolution. The PSII complex binds additional chlorophylls, carotenoids and specific lipids. as cofactor.

It is found in the cellular thylakoid membrane. It catalyses the reaction 2 a plastoquinone + 4 hnu + 2 H2O = 2 a plastoquinol + O2. Functionally, photosystem II (PSII) is a light-driven water:plastoquinone oxidoreductase that uses light energy to abstract electrons from H(2)O, generating O(2) and a proton gradient subsequently used for ATP formation. It consists of a core antenna complex that captures photons, and an electron transfer chain that converts photonic excitation into a charge separation. The D1/D2 (PsbA/PsbD) reaction center heterodimer binds P680, the primary electron donor of PSII as well as several subsequent electron acceptors. D2 is needed for assembly of a stable PSII complex. The sequence is that of Photosystem II D2 protein from Synechococcus sp. (strain JA-2-3B'a(2-13)) (Cyanobacteria bacterium Yellowstone B-Prime).